The primary structure comprises 138 residues: Large ribosomal subunit protein uL16 (138 aa).

It belongs to the universal ribosomal protein uL16 family. In terms of assembly, part of the 50S ribosomal subunit.

Its function is as follows. Binds 23S rRNA and is also seen to make contacts with the A and possibly P site tRNAs. The chain is Large ribosomal subunit protein uL16 from Mycoplasma genitalium (strain ATCC 33530 / DSM 19775 / NCTC 10195 / G37) (Mycoplasmoides genitalium).